The sequence spans 171 residues: Calcium channel flower homolog (171 aa).

At 1 to 31 (MSGSVAAGAAAGPVPPAQEEGMTWWYRWLCR) the chain is on the cytoplasmic side. The helical transmembrane segment at 32–52 (LAGVLGAVSCAISGLFNCVTI) threads the bilayer. At 53–56 (HPLN) the chain is on the extracellular side. The chain crosses the membrane as a helical span at residues 57 to 77 (IAAGVWMIMNAFILLLCEAPF). Residues 78-101 (CCQFVEFANTVAEKVDRLRSWQKA) lie on the Cytoplasmic side of the membrane. The helical transmembrane segment at 102 to 122 (VFYCGMAIVPIVMSLTLTTLL) threads the bilayer. Topologically, residues 123–124 (GN) are extracellular. The chain crosses the membrane as a helical span at residues 125–141 (AIAFATGVLYGLSALGK). The Cytoplasmic segment spans residues 142 to 171 (KGDAISYARIQQQRQQADEEKLAETFEGEL).

This sequence belongs to the calcium channel flower family. As to quaternary structure, interacts with adaptor protein complex 2 (AP-2). As to expression, expressed in calyces in the brain (at protein level). Detected in cultured hippocampal neurons (at protein level).

The protein resides in the cell membrane. It is found in the cytoplasmic vesicle. It localises to the secretory vesicle. Its subcellular location is the synaptic vesicle. The protein localises to the golgi apparatus. The protein resides in the vesicle. Transmembrane protein which mediates synaptic endocytosis and fitness-based cell culling. In response to different stimulus strengths, controls two major modes of synaptic vesicle (SV) retrieval in hippocampal neurons; Clathrin-mediated endocytosis (CME) in response to mild stimulation and activity-dependent bulk endocytosis (ADBE) in response to strong stimulation. In cytotoxic T-lymphoocytes (CTLs) facilitates calcium-dependent endocytosis of cytotoxic granules (CGs) at the immuno synapse. Different isoforms work as fitness fingerprints in 'loser' and 'winner' cells and thereby mediate win/lose decisions as part of the cell competition process. The polypeptide is Calcium channel flower homolog (Cacfd1) (Rattus norvegicus (Rat)).